A 330-amino-acid polypeptide reads, in one-letter code: Probable WRKY transcription factor 39 (330 aa).

The segment at residues 256 to 322 is a DNA-binding region (WRKY); the sequence is KIADIPPDEY…YEGEHNHSRI (67 aa).

It localises to the nucleus. In terms of biological role, transcription factor. Interacts specifically with the W box (5'-(T)TGAC[CT]-3'), a frequently occurring elicitor-responsive cis-acting element. The sequence is that of Probable WRKY transcription factor 39 (WRKY39) from Arabidopsis thaliana (Mouse-ear cress).